Consider the following 622-residue polypeptide: ABC transporter permease protein YxdM (622 aa).

A run of 10 helical transmembrane segments spans residues 20-40 (AFFL…MFLF), 56-76 (GLTA…LYSV), 118-138 (AGII…AYIL), 154-174 (ITAC…ILFV), 195-215 (PSVL…GMVL), 219-239 (VHGA…YFFF), 279-299 (LFFI…VLAM), 498-518 (TVQL…VFFV), 558-578 (IQLA…TLFA), and 590-610 (VAGP…LFFL).

The protein belongs to the ABC-4 integral membrane protein family. As to quaternary structure, the complex is composed of two ATP-binding proteins (YxdL) and two transmembrane proteins (YxdM).

It localises to the cell membrane. Its function is as follows. Part of the ABC transporter complex YxdLM which could be involved in peptide resistance. The polypeptide is ABC transporter permease protein YxdM (yxdM) (Bacillus subtilis (strain 168)).